Here is a 405-residue protein sequence, read N- to C-terminus: L-carnitine CoA-transferase (405 aa).

Lys97 and Arg104 together coordinate CoA. Asp169 acts as the Nucleophile in catalysis.

It belongs to the CoA-transferase III family. CaiB subfamily. As to quaternary structure, homodimer.

Its subcellular location is the cytoplasm. The catalysed reaction is crotonobetainyl-CoA + (R)-carnitine = crotonobetaine + (R)-carnitinyl-CoA. It carries out the reaction 4-(trimethylamino)butanoyl-CoA + (R)-carnitine = (R)-carnitinyl-CoA + 4-(trimethylamino)butanoate. Its pathway is amine and polyamine metabolism; carnitine metabolism. In terms of biological role, catalyzes the reversible transfer of the CoA moiety from gamma-butyrobetainyl-CoA to L-carnitine to generate L-carnitinyl-CoA and gamma-butyrobetaine. Is also able to catalyze the reversible transfer of the CoA moiety from gamma-butyrobetainyl-CoA or L-carnitinyl-CoA to crotonobetaine to generate crotonobetainyl-CoA. This is L-carnitine CoA-transferase from Escherichia coli O17:K52:H18 (strain UMN026 / ExPEC).